The chain runs to 394 residues: Putative F-box protein At5g66830 (394 aa).

The F-box domain occupies 17 to 63 (DWCWSKLPSDLMQFVFDRLGFADFQRAKSVCSSWLSVSRNSQPNNQI).

In Arabidopsis thaliana (Mouse-ear cress), this protein is Putative F-box protein At5g66830.